Consider the following 324-residue polypeptide: 4-hydroxy-3-methylbut-2-enyl diphosphate reductase (324 aa).

Residue Cys-28 coordinates [4Fe-4S] cluster. Residues His-57 and His-90 each coordinate (2E)-4-hydroxy-3-methylbut-2-enyl diphosphate. Residues His-57 and His-90 each contribute to the dimethylallyl diphosphate site. Residues His-57 and His-90 each contribute to the isopentenyl diphosphate site. Cys-112 lines the [4Fe-4S] cluster pocket. His-140 lines the (2E)-4-hydroxy-3-methylbut-2-enyl diphosphate pocket. His-140 serves as a coordination point for dimethylallyl diphosphate. Isopentenyl diphosphate is bound at residue His-140. Catalysis depends on Glu-142, which acts as the Proton donor. Thr-180 is a binding site for (2E)-4-hydroxy-3-methylbut-2-enyl diphosphate. Cys-210 provides a ligand contact to [4Fe-4S] cluster. (2E)-4-hydroxy-3-methylbut-2-enyl diphosphate-binding residues include Ser-238, Ser-239, Asn-240, and Ser-282. Residues Ser-238, Ser-239, Asn-240, and Ser-282 each contribute to the dimethylallyl diphosphate site. Ser-238, Ser-239, Asn-240, and Ser-282 together coordinate isopentenyl diphosphate.

The protein belongs to the IspH family. [4Fe-4S] cluster is required as a cofactor.

The enzyme catalyses isopentenyl diphosphate + 2 oxidized [2Fe-2S]-[ferredoxin] + H2O = (2E)-4-hydroxy-3-methylbut-2-enyl diphosphate + 2 reduced [2Fe-2S]-[ferredoxin] + 2 H(+). It carries out the reaction dimethylallyl diphosphate + 2 oxidized [2Fe-2S]-[ferredoxin] + H2O = (2E)-4-hydroxy-3-methylbut-2-enyl diphosphate + 2 reduced [2Fe-2S]-[ferredoxin] + 2 H(+). Its pathway is isoprenoid biosynthesis; dimethylallyl diphosphate biosynthesis; dimethylallyl diphosphate from (2E)-4-hydroxy-3-methylbutenyl diphosphate: step 1/1. It functions in the pathway isoprenoid biosynthesis; isopentenyl diphosphate biosynthesis via DXP pathway; isopentenyl diphosphate from 1-deoxy-D-xylulose 5-phosphate: step 6/6. In terms of biological role, catalyzes the conversion of 1-hydroxy-2-methyl-2-(E)-butenyl 4-diphosphate (HMBPP) into a mixture of isopentenyl diphosphate (IPP) and dimethylallyl diphosphate (DMAPP). Acts in the terminal step of the DOXP/MEP pathway for isoprenoid precursor biosynthesis. The protein is 4-hydroxy-3-methylbut-2-enyl diphosphate reductase of Ralstonia nicotianae (strain ATCC BAA-1114 / GMI1000) (Ralstonia solanacearum).